A 217-amino-acid polypeptide reads, in one-letter code: Putative N-acetylmuramoyl-L-alanine amidase (217 aa).

The MurNAc-LAA domain maps to 3–206 (IAIDAGHGGQ…ISKSISIALK (204 aa)).

It belongs to the N-acetylmuramoyl-L-alanine amidase 3 family.

Its subcellular location is the secreted. It carries out the reaction Hydrolyzes the link between N-acetylmuramoyl residues and L-amino acid residues in certain cell-wall glycopeptides.. Its function is as follows. Cell-wall hydrolase involved in septum cleavage during cell division. This is Putative N-acetylmuramoyl-L-alanine amidase (amiB) from Buchnera aphidicola subsp. Baizongia pistaciae (strain Bp).